Consider the following 295-residue polypeptide: Pyridoxal 5'-phosphate synthase subunit PdxS (295 aa).

D25 is a D-ribose 5-phosphate binding site. The Schiff-base intermediate with D-ribose 5-phosphate role is filled by K82. Position 154 (G154) interacts with D-ribose 5-phosphate. R166 serves as a coordination point for D-glyceraldehyde 3-phosphate. D-ribose 5-phosphate contacts are provided by residues G215 and 236–237 (GS).

The protein belongs to the PdxS/SNZ family. In the presence of PdxT, forms a dodecamer of heterodimers.

It carries out the reaction aldehydo-D-ribose 5-phosphate + D-glyceraldehyde 3-phosphate + L-glutamine = pyridoxal 5'-phosphate + L-glutamate + phosphate + 3 H2O + H(+). The protein operates within cofactor biosynthesis; pyridoxal 5'-phosphate biosynthesis. Functionally, catalyzes the formation of pyridoxal 5'-phosphate from ribose 5-phosphate (RBP), glyceraldehyde 3-phosphate (G3P) and ammonia. The ammonia is provided by the PdxT subunit. Can also use ribulose 5-phosphate and dihydroxyacetone phosphate as substrates, resulting from enzyme-catalyzed isomerization of RBP and G3P, respectively. The sequence is that of Pyridoxal 5'-phosphate synthase subunit PdxS from Bacillus mycoides (strain KBAB4) (Bacillus weihenstephanensis).